Here is a 687-residue protein sequence, read N- to C-terminus: Solute carrier organic anion transporter family member 1B2 (687 aa).

At 1–28 (MDHTQQSRKAAEAQPSRSKQTRFCDGFK) the chain is on the cytoplasmic side. The chain crosses the membrane as a helical span at residues 29 to 48 (LFLAALSFSYICKALGGVVM). Residues 49–67 (KSSITQIERRFDIPSSISG) are Extracellular-facing. The helical transmembrane segment at 68–88 (LIDGGFEIGNLLVIVFVSYFG) threads the bilayer. The Cytoplasmic segment spans residues 89-94 (SKLHRP). Residues 95 to 119 (KLIGIGCFIMGIGSILTALPHFFMG) traverse the membrane as a helical segment. The Extracellular portion of the chain corresponds to 120–165 (YYKYAKENDIGSLGNSTLTCFINQMTSPTGPSPEIVEKGCEKGLKS). N-linked (GlcNAc...) asparagine glycosylation occurs at asparagine 134. A helical membrane pass occupies residues 166-194 (HMWIYVLMGNMLRGIGETPIVPLGISYLD). Topologically, residues 195 to 213 (DFAKEGHTSMHLGTLHTIA) are cytoplasmic. The helical transmembrane segment at 214-234 (MIGPILGFIMSSVFAKIYVDV) threads the bilayer. At 235–252 (GYVDLNSVRITPNDARWV) the chain is on the extracellular side. A helical transmembrane segment spans residues 253–277 (GAWWLSFIVNGLLCITSSIPFFFLP). Residues 278-328 (KIPKRSQEERKNSVSLHAPKTDEEKKHMTNLTKQEEQDPSNMTGFLRSLRS) are Cytoplasmic-facing. The disordered stretch occupies residues 286 to 311 (ERKNSVSLHAPKTDEEKKHMTNLTKQ). A phosphoserine mark is found at serine 290 and serine 292. The helical transmembrane segment at 329-350 (ILTNEIYVIFLILTLLQVSGFI) threads the bilayer. Over 351–370 (GSFTYLFKFIEQQFGRTASQ) the chain is Extracellular. Residues 371–394 (ANFLLGIITIPTMATAMFLGGYIV) form a helical membrane-spanning segment. At 395–398 (KKFK) the chain is on the cytoplasmic side. A helical transmembrane segment spans residues 399–422 (LTSVGIAKFVFFTSSVAYAFQFLY). At 423–531 (FPLLCENKPF…YKCKTNYYFY (109 aa)) the chain is on the extracellular side. One can recognise a Kazal-like domain in the interval 450 to 507 (DVPLSYCNSDCSCDKNQWEPICGENGVTYISPCLAGCKSFRGDKKPNNTEFYDCSCIS). 3 disulfide bridges follow: cysteine 456-cysteine 486, cysteine 462-cysteine 482, and cysteine 471-cysteine 505. N-linked (GlcNAc...) asparagine glycans are attached at residues asparagine 496 and asparagine 511. Residues 532 to 554 (IILQVTVSFFTAMGSPSLILILM) form a helical membrane-spanning segment. Residues 555–563 (KSVQPELKS) are Cytoplasmic-facing. Residues 564-589 (LAMGFHSLIIRALGGILAPIYYGAFI) traverse the membrane as a helical segment. Residues 590–623 (DRTCIKWSVTSCGKRGACRLYNSRLFGFSYLGLN) are Extracellular-facing. Residues 624-641 (LALKTPPLFLYVVLIYFT) form a helical membrane-spanning segment. Over 642–687 (KRKYKRNDNKTLENGRQFTDEGNPDSVNKNGYYCVPYDEQSNETPL) the chain is Cytoplasmic. Phosphothreonine is present on threonine 660. The residue at position 667 (serine 667) is a Phosphoserine.

This sequence belongs to the organo anion transporter (TC 2.A.60) family. Liver specific. Expression is highest in central perivenous hepatocytes and lowest in the periportal region. Isoform 1 predominates. Not detected in heart, brain, kidney, skeletal muscle, lung, testis or spleen.

The protein resides in the basolateral cell membrane. It catalyses the reaction estrone 3-sulfate(out) = estrone 3-sulfate(in). The enzyme catalyses taurocholate(out) = taurocholate(in). The catalysed reaction is prostaglandin E2(out) = prostaglandin E2(in). It carries out the reaction L-thyroxine(out) = L-thyroxine(in). Functionally, mediates the Na(+)-independent uptake of organic anions such as taurochlate, bromosulfophthalein and steroid conjugates (estrone 3-sulfate, 17-beta-glucuronosyl estradiol, dehydroepiandrosterone sulfate). Also transports prostaglandin E2 and L-thyroxine (T4). Shows a pH-sensitive substrate specificity which may be ascribed to the protonation state of the binding site and leads to a stimulation of substrate transport in an acidic microenvironment. Hydrogencarbonate/HCO3(-) acts as the probable counteranion that exchanges for organic anions. In Rattus norvegicus (Rat), this protein is Solute carrier organic anion transporter family member 1B2 (Slco1b2).